Reading from the N-terminus, the 256-residue chain is MTVKCNKCKEEINKEDLEKNYYICPLCGKLNRMPAKNRLQMLTEKFDVMFNDQEFTDPIDFPSYKEKYESAREKSGETEGVVCGRGTIGGNDTCIFIMEPNFMMGSMGTVVGDRITALFEYATKNRLPVIGYTVSGGARMQEGALSLMQMAKVSAAAKRHSDAGLLYVVCTTDPTMGGATASFAMLGDIIISEPGAMIGFAGKRVVEQVTGEVLPDNFQSAEFQLKNGFIDDIVPRQEQRAYLANILAIHAETVSA.

One can recognise a CoA carboxyltransferase N-terminal domain in the interval 1-256; sequence MTVKCNKCKE…LAIHAETVSA (256 aa). Zn(2+) is bound by residues C5, C8, C24, and C27. The C4-type zinc finger occupies 5–27; that stretch reads CNKCKEEINKEDLEKNYYICPLC.

It belongs to the AccD/PCCB family. In terms of assembly, acetyl-CoA carboxylase is a heterohexamer composed of biotin carboxyl carrier protein (AccB), biotin carboxylase (AccC) and two subunits each of ACCase subunit alpha (AccA) and ACCase subunit beta (AccD). Requires Zn(2+) as cofactor.

The protein localises to the cytoplasm. The catalysed reaction is N(6)-carboxybiotinyl-L-lysyl-[protein] + acetyl-CoA = N(6)-biotinyl-L-lysyl-[protein] + malonyl-CoA. Its pathway is lipid metabolism; malonyl-CoA biosynthesis; malonyl-CoA from acetyl-CoA: step 1/1. Component of the acetyl coenzyme A carboxylase (ACC) complex. Biotin carboxylase (BC) catalyzes the carboxylation of biotin on its carrier protein (BCCP) and then the CO(2) group is transferred by the transcarboxylase to acetyl-CoA to form malonyl-CoA. This Lachnospira eligens (strain ATCC 27750 / DSM 3376 / VPI C15-48 / C15-B4) (Eubacterium eligens) protein is Acetyl-coenzyme A carboxylase carboxyl transferase subunit beta 2.